The sequence spans 113 residues: U11-theraphotoxin-Hhn1a (113 aa).

An N-terminal signal peptide occupies residues 1–21 (MNTVRVTFLLVFVLAVSLGQA). A propeptide spanning residues 22-74 (DKDENRMEVQEKTEQGKSYLDFAENLLLQKLEELEAKLLEEDSEESRNSRQKR) is cleaved from the precursor. The interval 61 to 83 (EEDSEESRNSRQKRCIGEGVPCD) is disordered. Disulfide bonds link C75-C90, C82-C95, and C89-C110.

This sequence belongs to the neurotoxin 14 (magi-1) family. 01 (HNTX-16) subfamily. Expressed by the venom gland.

It localises to the secreted. Its function is as follows. Probable ion channel inhibitor. The polypeptide is U11-theraphotoxin-Hhn1a (Cyriopagopus hainanus (Chinese bird spider)).